A 283-amino-acid polypeptide reads, in one-letter code: Pantothenate synthetase (283 aa).

Residue 30–37 (MGALHEGH) participates in ATP binding. Residue His37 is the Proton donor of the active site. Gln61 contacts (R)-pantoate. Residue Gln61 coordinates beta-alanine. An ATP-binding site is contributed by 150–153 (GRKD). Gln156 provides a ligand contact to (R)-pantoate. Residues Val179 and 187–190 (MSSR) contribute to the ATP site.

It belongs to the pantothenate synthetase family. In terms of assembly, homodimer.

Its subcellular location is the cytoplasm. It catalyses the reaction (R)-pantoate + beta-alanine + ATP = (R)-pantothenate + AMP + diphosphate + H(+). It participates in cofactor biosynthesis; (R)-pantothenate biosynthesis; (R)-pantothenate from (R)-pantoate and beta-alanine: step 1/1. Its function is as follows. Catalyzes the condensation of pantoate with beta-alanine in an ATP-dependent reaction via a pantoyl-adenylate intermediate. In Rhodopirellula baltica (strain DSM 10527 / NCIMB 13988 / SH1), this protein is Pantothenate synthetase.